A 219-amino-acid polypeptide reads, in one-letter code: MKKRRKICYCNTALLLMILLAGCTDSKDGEAQQPSNQASAVQTDEKHTEPEESTKIRKDEAEPITESEESATKAANDTSSAEEKSKEDNVLAAYSSEKIEYARVWLQLGPNQEIDELNVRHIAAGEPINPNDDTSASYPENVTQLAGSRLVDGSVTYHGNGDGTIHVYNVPLRWDSADDIEKGVMREVTESIIKNRKTVYVDTGDDEKIKRLIDIMMIH.

An N-terminal signal peptide occupies residues Met-1 to Gly-22. Cys-23 carries the N-palmitoyl cysteine lipid modification. A lipid anchor (S-diacylglycerol cysteine) is attached at Cys-23. The segment at Ser-26 to Asn-89 is disordered. Residues Gln-32–Gln-42 are compositionally biased toward polar residues. Over residues Thr-43–Ala-61 the composition is skewed to basic and acidic residues.

Its subcellular location is the cell membrane. This is an uncharacterized protein from Bacillus subtilis (strain 168).